Here is a 1064-residue protein sequence, read N- to C-terminus: Rab GTPase-activating protein 1 (1064 aa).

The segment at 1–101 (MDDKASVGKI…SNQLSASSTI (101 aa)) is disordered. A compositionally biased stretch (low complexity) spans 7–22 (VGKISVSSDSVSTLNS). Serine 42 is modified (phosphoserine). Over residues 91–101 (LSNQLSASSTI) the composition is skewed to polar residues. Residues 137-293 (EDSVVFNKLT…IFTFSVSLEI (157 aa)) enclose the PID domain. Serine 355 is subject to Phosphoserine. Residues 478 to 520 (RERRKTTASPSVRLPQSGSQSSMIPSPPEDDEEEDNDEPLLSG) form a disordered region. A compositionally biased stretch (polar residues) spans 484 to 501 (TASPSVRLPQSGSQSSMI). Over residues 505-515 (PEDDEEEDNDE) the composition is skewed to acidic residues. Positions 561–747 (GVPEALRGEV…HIIDLLLCEG (187 aa)) constitute a Rab-GAP TBC domain. A coiled-coil region spans residues 805–1038 (SQKKLKKFEK…HLGLALSEVQ (234 aa)). Phosphothreonine is present on threonine 991.

In terms of assembly, interacts with RAB6A and tubulin gamma.

It localises to the cytoplasm. It is found in the cytosol. The protein localises to the cytoskeleton. The protein resides in the microtubule organizing center. Its subcellular location is the centrosome. In terms of biological role, may act as a GTPase-activating protein of RAB6A. May play a role in microtubule nucleation by centrosome. May participate in a RAB6A-mediated pathway involved in the metaphase-anaphase transition. This Mus musculus (Mouse) protein is Rab GTPase-activating protein 1.